A 430-amino-acid chain; its full sequence is Adenylosuccinate synthetase (430 aa).

GTP-binding positions include Gly12–Lys18 and Gly40–Thr42. Residue Asp13 is the Proton acceptor of the active site. Positions 13 and 40 each coordinate Mg(2+). IMP is bound by residues Asp13–Lys16, Asn38–His41, Thr128, Arg142, Gln223, Thr238, and Arg302. Residue His41 is the Proton donor of the active site. Val298–Arg304 lines the substrate pocket. GTP-binding positions include Arg304, Lys330 to Asp332, and Gly412 to Gly414.

Belongs to the adenylosuccinate synthetase family. As to quaternary structure, homodimer. The cofactor is Mg(2+).

It localises to the cytoplasm. It catalyses the reaction IMP + L-aspartate + GTP = N(6)-(1,2-dicarboxyethyl)-AMP + GDP + phosphate + 2 H(+). It functions in the pathway purine metabolism; AMP biosynthesis via de novo pathway; AMP from IMP: step 1/2. In terms of biological role, plays an important role in the de novo pathway of purine nucleotide biosynthesis. Catalyzes the first committed step in the biosynthesis of AMP from IMP. This Corynebacterium glutamicum (strain ATCC 13032 / DSM 20300 / JCM 1318 / BCRC 11384 / CCUG 27702 / LMG 3730 / NBRC 12168 / NCIMB 10025 / NRRL B-2784 / 534) protein is Adenylosuccinate synthetase.